The following is a 292-amino-acid chain: tRNA-cytidine(32) 2-sulfurtransferase (292 aa).

A PP-loop motif motif is present at residues 53-58 (SGGKDS). [4Fe-4S] cluster-binding residues include C128, C131, and C219.

This sequence belongs to the TtcA family. As to quaternary structure, homodimer. Mg(2+) is required as a cofactor. [4Fe-4S] cluster serves as cofactor.

The protein resides in the cytoplasm. It carries out the reaction cytidine(32) in tRNA + S-sulfanyl-L-cysteinyl-[cysteine desulfurase] + AH2 + ATP = 2-thiocytidine(32) in tRNA + L-cysteinyl-[cysteine desulfurase] + A + AMP + diphosphate + H(+). It functions in the pathway tRNA modification. Catalyzes the ATP-dependent 2-thiolation of cytidine in position 32 of tRNA, to form 2-thiocytidine (s(2)C32). The sulfur atoms are provided by the cysteine/cysteine desulfurase (IscS) system. The polypeptide is tRNA-cytidine(32) 2-sulfurtransferase (Cereibacter sphaeroides (strain ATCC 17029 / ATH 2.4.9) (Rhodobacter sphaeroides)).